The chain runs to 430 residues: Glycine reductase complex component B subunits alpha and beta (430 aa).

Catalysis depends on Cys242, which acts as the Schiff-base intermediate with substrate; via pyruvic acid. Residue Cys242 is modified to Pyruvic acid (Cys).

In terms of assembly, heterohexamer of two alpha, two beta and two gamma subunits. Component of the glycine reductase complex, together with components A and C. PB is substrate specific. In terms of processing, the peptide chain is cleaved into beta and alpha chains, and the alpha chain N-terminal cysteine is deaminated and oxidized to form a reactive pyruvoyl group.

The enzyme catalyses acetyl phosphate + [thioredoxin]-disulfide + NH4(+) + H2O = [thioredoxin]-dithiol + glycine + phosphate + H(+). Functionally, in the first step of glycine reductase, the substrate is bound to component PB via a Schiff base intermediate. Then the PB-activated substrate is nucleophilically attacked by the selenol anion of component PA to transform it to a carboxymethylated selenoether and the respective amine. By action of component PC, acetyl phosphate is formed, leaving component PA in its oxidized state. Finally component PA becomes reduced by the thioredoxin system to start a new catalytic cycle of reductive deamination. The polypeptide is Glycine reductase complex component B subunits alpha and beta (grdE) (Acetoanaerobium sticklandii (strain ATCC 12662 / DSM 519 / JCM 1433 / CCUG 9281 / NCIMB 10654 / HF) (Clostridium sticklandii)).